A 271-amino-acid polypeptide reads, in one-letter code: Probable esterase D14L (271 aa).

Catalysis depends on S96, which acts as the Nucleophile. Catalysis depends on residues D218 and H247.

This sequence belongs to the AB hydrolase superfamily. As to quaternary structure, component of an intracellular receptor complex involved in the detection of the smoke compound karrikin. Expressed constitutively in all organs (e.g. roots, stems, leaves, panicles and embryos).

It localises to the nucleus. It is found in the cytoplasm. Its function is as follows. May be involved in strigolactone signaling pathway. Essential for plant responses to karrikins, a class of butenolide compounds, structurally similar to strigolactones, released from burning vegetation that stimulate seed germination and enhance seedling photomorphogenesis. Mediates a specific perception of karrikin. Required for the establishment of symbiosis with the arbuscular mycorrhizal fungi (AMF) Rhizophagus irregularis and Gigaspora rosea. Karrikin binding induces a conformational change. This Oryza sativa subsp. japonica (Rice) protein is Probable esterase D14L (D14L).